A 153-amino-acid polypeptide reads, in one-letter code: Movement protein (153 aa).

Disordered stretches follow at residues 1 to 24 (MAQE…EQDP) and 107 to 153 (ALSL…RNQR). 2 stretches are compositionally biased toward polar residues: residues 109–122 (SLLS…NQPW) and 140–153 (GQRQ…RNQR).

Belongs to the luteoviruses movement protein family.

The protein localises to the host nucleus envelope. Functionally, transports viral genome to neighboring plant cells directly through plasmosdesmata, without any budding. The movement protein allows efficient cell to cell propagation, by bypassing the host cell wall barrier. Acts as a suppressor of RNA-mediated gene silencing, also known as post-transcriptional gene silencing (PTGS), a mechanism of plant viral defense that limits the accumulation of viral RNAs. The polypeptide is Movement protein (Avena byzantina (Oat)).